A 1201-amino-acid polypeptide reads, in one-letter code: Zinc finger protein sdc-1 (1201 aa).

7 consecutive C2H2-type zinc fingers follow at residues 117–139 (LTCA…RGVH), 145–168 (YMCQ…RTSC), 233–254 (SSCH…GNVH), 268–290 (YFCH…WRLH), 486–513 (IVCH…LLRH), 521–543 (YHCA…INDC), and 652–674 (VVCF…DYCH). Residues 1164–1201 (KRRNSETREHELIELDTDDLNEPSTSDGRYSFGHHGYR) are disordered. Positions 1167–1176 (NSETREHELI) are enriched in basic and acidic residues.

As to quaternary structure, component of the SDC complex, which consists of sdc-1, sdc-2 and sdc-3. Within the complex, interacts with sdc-2 and sdc-3.

It localises to the nucleus. The protein localises to the chromosome. In terms of biological role, embryonic transcription factor regulating downstream genes involved specifically in the sex determination and dosage compensation pathways, or regulating other genes involved in the coordinate control of both processes. Component of the SDC complex that functions in sex determination and in X chromosome dosage compensation specifically in hermaphrodite (XX) animals. Involved in the recruitment of the condensin I-like dosage compensation complex to the male sex-determining autosomal gene her-1, thereby contributing to its repression and initiating hermaphrodite sexual development. Similarly, might contribute to X-linked gene repression through recruitment of the dosage compensation complex to the X chromosomes in hermaphrodites. Seems to be involved in the depletion of histone H4 lysine 16 acetylation (H4K16ac) on dosage compensated X chromosomes. Plays a role in developmental rate and body fat regulation downstream of the TOR complex 2 pathway. This is Zinc finger protein sdc-1 (sdc-1) from Caenorhabditis elegans.